The chain runs to 581 residues: Lipoprotein LpqB (581 aa).

The first 23 residues, 1–23 (MRNHVSRYLTALIAVGCAATTAA), serve as a signal peptide directing secretion. A lipid anchor (N-palmitoyl cysteine) is attached at Cys-24. The S-diacylglycerol cysteine moiety is linked to residue Cys-24.

The protein belongs to the LpqB lipoprotein family.

Its subcellular location is the cell membrane. This Corynebacterium diphtheriae (strain ATCC 700971 / NCTC 13129 / Biotype gravis) protein is Lipoprotein LpqB.